The chain runs to 531 residues: Tryptophan biosynthesis protein TRP1 (531 aa).

The indole-3-glycerol phosphate synthase stretch occupies residues 1–254 (MGNILEEIAA…TVKDLLQNVT (254 aa)). The interval 255 to 531 (RHSESGEFAL…TLKIDEETEN (277 aa)) is N-(5'-phosphoribosyl)anthranilate isomerase.

It in the N-terminal section; belongs to the TrpC family. The protein in the C-terminal section; belongs to the TrpF family.

It catalyses the reaction N-(5-phospho-beta-D-ribosyl)anthranilate = 1-(2-carboxyphenylamino)-1-deoxy-D-ribulose 5-phosphate. The catalysed reaction is 1-(2-carboxyphenylamino)-1-deoxy-D-ribulose 5-phosphate + H(+) = (1S,2R)-1-C-(indol-3-yl)glycerol 3-phosphate + CO2 + H2O. It functions in the pathway amino-acid biosynthesis; L-tryptophan biosynthesis; L-tryptophan from chorismate: step 3/5. Its pathway is amino-acid biosynthesis; L-tryptophan biosynthesis; L-tryptophan from chorismate: step 4/5. Functionally, bifunctional enzyme that catalyzes two sequential steps of tryptophan biosynthetic pathway. This is Tryptophan biosynthesis protein TRP1 (TRP1) from Phytophthora nicotianae (Potato buckeye rot agent).